The sequence spans 798 residues: Neuroligin-1 (798 aa).

The N-terminal stretch at Met-1–Ser-17 is a signal peptide. At Tyr-18–Leu-685 the chain is on the extracellular side. Cysteines 86 and 125 form a disulfide. Residues Asn-164, Asn-292, and Asn-315 are each glycosylated (N-linked (GlcNAc...) asparagine). A disulfide bridge links Cys-288 with Cys-307. Residues Ala-636 to Ala-676 form a disordered region. Pro residues predominate over residues Pro-639–Glu-652. Low complexity predominate over residues Leu-653 to Thr-665. Residues Gly-686–Val-706 form a helical membrane-spanning segment. The Cytoplasmic segment spans residues Arg-707–Val-798. The disordered stretch occupies residues His-731–Pro-765.

This sequence belongs to the type-B carboxylesterase/lipase family. Interacts (via extracellular domain) with isoform b of madd-4; the interaction is required for the localization to postsynaptic domains. Interacts with unc-49.

The protein localises to the cell membrane. The protein resides in the synapse. Functionally, probable neuronal cell surface protein thought to be involved in cell-cell-interactions by forming intercellular junctions through binding to beta-neurexins. Plays a role in the clustering of the GABA(A) receptor unc-49 at postsynaptic sites in neuromuscular junctions (NMJs) via the interaction with madd-4 and neurexin nrx-1 and is thereby required for normal GABAergic synaptic transmission. This is Neuroligin-1 (nlg-1) from Caenorhabditis elegans.